The chain runs to 197 residues: Pyridoxal 5'-phosphate synthase subunit PdxT (197 aa).

Residue 53–55 (GES) coordinates L-glutamine. Cys-85 functions as the Nucleophile in the catalytic mechanism. L-glutamine-binding positions include Arg-114 and 142–143 (IR). Catalysis depends on charge relay system residues His-179 and Glu-181.

Belongs to the glutaminase PdxT/SNO family. In terms of assembly, in the presence of PdxS, forms a dodecamer of heterodimers. Only shows activity in the heterodimer.

The enzyme catalyses aldehydo-D-ribose 5-phosphate + D-glyceraldehyde 3-phosphate + L-glutamine = pyridoxal 5'-phosphate + L-glutamate + phosphate + 3 H2O + H(+). The catalysed reaction is L-glutamine + H2O = L-glutamate + NH4(+). The protein operates within cofactor biosynthesis; pyridoxal 5'-phosphate biosynthesis. Catalyzes the hydrolysis of glutamine to glutamate and ammonia as part of the biosynthesis of pyridoxal 5'-phosphate. The resulting ammonia molecule is channeled to the active site of PdxS. The polypeptide is Pyridoxal 5'-phosphate synthase subunit PdxT (Thermococcus onnurineus (strain NA1)).